The sequence spans 348 residues: MHMNRINIRDMSLEEIESFISSLGKEKYRARQIMKWLYSQGAKSFDEMTTLSRAVRDQLNEMACITLPEIARVQQSSDGTRKILFRLQDNSFIESVLIPGKHNWTACISTQVGCHMGCRFCFTARQGFRRNLKPSEITGQLTMLQFYLPEGPEIKNIVMMGMGEPLANYRNTLKAIRIITSDYGLGFSTRKITLSTSGITPMIEQLGRDLCINLAISLNAPTDSIRSELMPVNRKYPLDRLLQACRNYPMPGRRMLTFEYILIDGVNSSPAHAEMLCRLLKGIRCKLNLIRFNEFPDCPFKTPSEETVLAFQQILVKHHYTAIIRASRGRDILAACGQLSGKALEEKL.

Glu-94 (proton acceptor) is an active-site residue. The 231-residue stretch at 100-330 folds into the Radical SAM core domain; it reads GKHNWTACIS…TAIIRASRGR (231 aa). Residues Cys-107 and Cys-336 are joined by a disulfide bond. Residues Cys-114, Cys-118, and Cys-121 each coordinate [4Fe-4S] cluster. Residues 163-164, Ser-195, 217-219, and Asn-293 each bind S-adenosyl-L-methionine; these read GE and SLN. The S-methylcysteine intermediate role is filled by Cys-336.

The protein belongs to the radical SAM superfamily. RlmN family. It depends on [4Fe-4S] cluster as a cofactor.

Its subcellular location is the cytoplasm. The catalysed reaction is adenosine(2503) in 23S rRNA + 2 reduced [2Fe-2S]-[ferredoxin] + 2 S-adenosyl-L-methionine = 2-methyladenosine(2503) in 23S rRNA + 5'-deoxyadenosine + L-methionine + 2 oxidized [2Fe-2S]-[ferredoxin] + S-adenosyl-L-homocysteine. It carries out the reaction adenosine(37) in tRNA + 2 reduced [2Fe-2S]-[ferredoxin] + 2 S-adenosyl-L-methionine = 2-methyladenosine(37) in tRNA + 5'-deoxyadenosine + L-methionine + 2 oxidized [2Fe-2S]-[ferredoxin] + S-adenosyl-L-homocysteine. Functionally, specifically methylates position 2 of adenine 2503 in 23S rRNA and position 2 of adenine 37 in tRNAs. m2A2503 modification seems to play a crucial role in the proofreading step occurring at the peptidyl transferase center and thus would serve to optimize ribosomal fidelity. The polypeptide is Dual-specificity RNA methyltransferase RlmN (Syntrophus aciditrophicus (strain SB)).